Reading from the N-terminus, the 364-residue chain is BOLA class I histocompatibility antigen, alpha chain BL3-7 (364 aa).

Positions Met1–Ala27 are cleaved as a signal peptide. The tract at residues Gly28–Thr117 is alpha-1. At Gly28–Ile310 the chain is on the extracellular side. A glycan (N-linked (GlcNAc...) asparagine) is linked at Asn113. The tract at residues Gly118–Ala209 is alpha-2. 2 cysteine pairs are disulfide-bonded: Cys128–Cys191 and Cys230–Cys286. The alpha-3 stretch occupies residues Asp210 to Trp301. Residues Pro212 to Thr298 form the Ig-like C1-type domain. The interval Glu302–Ile310 is connecting peptide. Residues Met311 to Trp331 traverse the membrane as a helical segment. The Cytoplasmic segment spans residues Arg332 to Val364. 2 positions are modified to phosphoserine: Ser355 and Ser358.

The protein belongs to the MHC class I family. Heterodimer of an alpha chain and a beta chain (beta-2-microglobulin).

It is found in the membrane. Involved in the presentation of foreign antigens to the immune system. This is BOLA class I histocompatibility antigen, alpha chain BL3-7 from Bos taurus (Bovine).